Reading from the N-terminus, the 343-residue chain is Phosphate acyltransferase (343 aa).

The protein belongs to the PlsX family. In terms of assembly, homodimer. Probably interacts with PlsY.

The protein resides in the cytoplasm. The catalysed reaction is a fatty acyl-[ACP] + phosphate = an acyl phosphate + holo-[ACP]. The protein operates within lipid metabolism; phospholipid metabolism. Catalyzes the reversible formation of acyl-phosphate (acyl-PO(4)) from acyl-[acyl-carrier-protein] (acyl-ACP). This enzyme utilizes acyl-ACP as fatty acyl donor, but not acyl-CoA. The sequence is that of Phosphate acyltransferase from Haemophilus ducreyi (strain 35000HP / ATCC 700724).